Consider the following 446-residue polypeptide: NADH-quinone oxidoreductase subunit D (446 aa).

Belongs to the complex I 49 kDa subunit family. As to quaternary structure, NDH-1 is composed of 14 different subunits. Subunits NuoB, C, D, E, F, and G constitute the peripheral sector of the complex.

It is found in the cell membrane. The catalysed reaction is a quinone + NADH + 5 H(+)(in) = a quinol + NAD(+) + 4 H(+)(out). Its function is as follows. NDH-1 shuttles electrons from NADH, via FMN and iron-sulfur (Fe-S) centers, to quinones in the respiratory chain. The immediate electron acceptor for the enzyme in this species is believed to be a menaquinone. Couples the redox reaction to proton translocation (for every two electrons transferred, four hydrogen ions are translocated across the cytoplasmic membrane), and thus conserves the redox energy in a proton gradient. This is NADH-quinone oxidoreductase subunit D from Nocardioides sp. (strain ATCC BAA-499 / JS614).